The following is a 295-amino-acid chain: N-acetylmuramic acid 6-phosphate etherase (295 aa).

In terms of domain architecture, SIS spans 53–216 (AIQRFNNGGR…STMTMIGVGK (164 aa)). Glu-81 acts as the Proton donor in catalysis. Glu-112 is a catalytic residue.

It belongs to the GCKR-like family. MurNAc-6-P etherase subfamily. As to quaternary structure, homodimer.

The catalysed reaction is N-acetyl-D-muramate 6-phosphate + H2O = N-acetyl-D-glucosamine 6-phosphate + (R)-lactate. The protein operates within amino-sugar metabolism; N-acetylmuramate degradation. In terms of biological role, specifically catalyzes the cleavage of the D-lactyl ether substituent of MurNAc 6-phosphate, producing GlcNAc 6-phosphate and D-lactate. The sequence is that of N-acetylmuramic acid 6-phosphate etherase from Staphylococcus epidermidis (strain ATCC 35984 / DSM 28319 / BCRC 17069 / CCUG 31568 / BM 3577 / RP62A).